A 267-amino-acid chain; its full sequence is Short-chain dehydrogenase/reductase GME11361 (267 aa).

The NADP(+) site is built by isoleucine 10, threonine 36, lysine 42, aspartate 57, asparagine 80, tyrosine 129, lysine 133, valine 162, and serine 164. The Proton acceptor role is filled by tyrosine 129. The active-site Lowers pKa of active site Tyr is lysine 133.

This sequence belongs to the short-chain dehydrogenases/reductases (SDR) family.

It participates in secondary metabolite biosynthesis. Its function is as follows. Short-chain dehydrogenase/reductase; part of the gene cluster that mediates the biosynthesis of dibenzodioxocinones such as pestalotiollide B, a novel class of inhibitors against cholesterol ester transfer protein (CEPT). The biosynthesis initiates from condensation of acetate and malonate units catalyzed by the non-reducing PKS pks8/GME11356. Pks8/GME11356 lacks a thioesterase (TE) domain, which is important to the cyclizing of the third ring of atrochrysone carboxylic acid, and the esterase GME11355 might play the role of TE and catalyzes the cyclization reaction of the C ring. The lactamase-like protein GME11357 (or other beta-lactamases in Pestalotiopsis microspora) probably hydrolyzes the thioester bond between the ACP of pks8/GME11356 and the intermediate to release atrochrysone carboxylic acid, which is spontaneously dehydrates to form endocrocin anthrone. Endocrocin anthrone is further converted to emodin via the endocrocin intermediate. Emodin is then oxidized by several enzymes such as the Baeyer-Villiger oxidase GME11358, the oxidoreductase GME11367, the short chain dehydrogenase/reductase GME11373, as well as by other oxidoreductases from the cluster, to modify the A and C rings and open the B ring, and finally yield monodictyphenone. The prenyltransferase GME11375 may catalyze the addition reaction between the C5 side chains and the carbon bone of dibenzodioxocinones. The remaining biochemical reactions to the final product dibenzodioxocinones should be methylation catalyzed by methyltransferase GME11366 and reduction and lactonization reaction catalyzed by a series of oxidordeuctases. This is Short-chain dehydrogenase/reductase GME11361 from Pestalotiopsis microspora.